The chain runs to 356 residues: Guanine nucleotide-binding protein alpha-2 subunit (356 aa).

Gly-2 carries N-myristoyl glycine lipidation. Cys-4 carries the S-palmitoyl cysteine lipid modification. The 322-residue stretch at 35–356 (REVKLLLLGA…LTNNLRDIVL (322 aa)) folds into the G-alpha domain. Residues 38–51 (KLLLLGAGESGKST) are G1 motif. 14 residues coordinate GTP: Glu-46, Ser-47, Gly-48, Lys-49, Ser-50, Thr-51, Asp-153, Leu-178, Thr-184, Gly-206, Asn-272, Lys-273, Asp-275, and Ala-329. Residue Ser-50 coordinates Mg(2+). A G2 motif region spans residues 176-184 (DILRCRNKT). Residue Thr-184 coordinates Mg(2+). The segment at 199–208 (YRIFDVGGQR) is G3 motif. The G4 motif stretch occupies residues 268–275 (ILFLNKVD). The segment at 327–332 (TNATDV) is G5 motif.

This sequence belongs to the G-alpha family. In terms of assembly, g proteins are composed of 3 units; alpha, beta and gamma. The alpha chain contains the guanine nucleotide binding site. Mg(2+) is required as a cofactor.

Its function is as follows. Guanine nucleotide-binding proteins (G proteins) are involved as modulators or transducers in various transmembrane signaling systems. The chain is Guanine nucleotide-binding protein alpha-2 subunit (GPA2) from Mycosarcoma maydis (Corn smut fungus).